Consider the following 54-residue polypeptide: Large ribosomal subunit protein bL33B (54 aa).

It belongs to the bacterial ribosomal protein bL33 family.

The sequence is that of Large ribosomal subunit protein bL33B from Myxococcus xanthus (strain DK1622).